Here is a 477-residue protein sequence, read N- to C-terminus: Membrane-bound lytic murein transglycosylase F (477 aa).

The first 22 residues, 1 to 22 (MTRFLLIIILGFLLTACQQVTV), serve as a signal peptide directing secretion. A non-LT domain region spans residues 23–257 (DEPEFVPHQL…HLNEKYFGHV (235 aa)). Residues 258–477 (KRFDYIDTRA…AGSLSPDQPK (220 aa)) form an LT domain region. The active site involves Glu302. Residues 446–477 (SKQPMPEDEQNDLIAEELPSMPAGSLSPDQPK) are disordered. Positions 451–460 (PEDEQNDLIA) are enriched in acidic residues.

The protein in the N-terminal section; belongs to the bacterial solute-binding protein 3 family. It in the C-terminal section; belongs to the transglycosylase Slt family.

It localises to the cell outer membrane. It carries out the reaction Exolytic cleavage of the (1-&gt;4)-beta-glycosidic linkage between N-acetylmuramic acid (MurNAc) and N-acetylglucosamine (GlcNAc) residues in peptidoglycan, from either the reducing or the non-reducing ends of the peptidoglycan chains, with concomitant formation of a 1,6-anhydrobond in the MurNAc residue.. Functionally, murein-degrading enzyme that degrades murein glycan strands and insoluble, high-molecular weight murein sacculi, with the concomitant formation of a 1,6-anhydromuramoyl product. Lytic transglycosylases (LTs) play an integral role in the metabolism of the peptidoglycan (PG) sacculus. Their lytic action creates space within the PG sacculus to allow for its expansion as well as for the insertion of various structures such as secretion systems and flagella. The sequence is that of Membrane-bound lytic murein transglycosylase F from Shewanella sp. (strain W3-18-1).